A 420-amino-acid chain; its full sequence is Uteroferrin-associated basic protein 2 (420 aa).

A signal peptide spans 1–25; the sequence is MSHGKMPLVLSLVLILCGLFNSISC. Asn225, Asn271, and Asn343 each carry an N-linked (GlcNAc...) asparagine glycan.

This sequence belongs to the serpin family. UTMP subfamily.

It localises to the secreted. Its subcellular location is the extracellular space. The protein is Uteroferrin-associated basic protein 2 of Sus scrofa (Pig).